Consider the following 989-residue polypeptide: Voltage-gated delayed rectifier potassium channel KCNH1 (989 aa).

Residues 1–220 are Cytoplasmic-facing; sequence MTMAGGRRGL…LHYCVFKTTW (220 aa). Residues 14 to 94 form the PAS domain; the sequence is QNTFLENIVR…QTFENYEMNS (81 aa). The PAC domain maps to 93 to 145; the sequence is NSFEILMYKKNRTPVWFFVKIAPIRNEQDKVVLFLCTFSDITAFKQPIEDDSC. The interval 151 to 162 is required for phosphatidylinositol bisphosphate binding; sequence FARLTRALTSSR. A helical membrane pass occupies residues 221–241; the sequence is DWIILILTFYTAILVPYNVSF. Residues 242-248 are Extracellular-facing; sequence KTRQNNV. A helical membrane pass occupies residues 249–269; that stretch reads AWLVVDSIVDVIFLVDIVLNF. Over 270–290 the chain is Cytoplasmic; that stretch reads HTTFVGPAGEVISDPKLIRMN. A helical transmembrane segment spans residues 291–309; that stretch reads YLKTWFVIDLLSCLPYDVI. At 310-345 the chain is on the extracellular side; that stretch reads NAFENVDEVSAFMGDPGKIGFADQIPPPLEGRESQG. Residues 346–368 form a helical; Voltage-sensor membrane-spanning segment; that stretch reads ISSLFSSLKVVRLLRLGRVARKL. The Cytoplasmic portion of the chain corresponds to 369-377; sequence DHYIEYGAA. The helical transmembrane segment at 378-399 threads the bilayer; sequence VLVLLVCVFGLAAHWMACIWYS. Residues 400–448 lie on the Extracellular side of the membrane; the sequence is IGDYEIFDEDTKTIRNNSWLYQLALDIGTPYQFNGSGSGKWEGGPSKNS. Residues N415 and N433 are each glycosylated (N-linked (GlcNAc...) asparagine). An intramembrane region (pore-forming) is located at residues 449–470; it reads VYISSLYFTMTSLTSVGFGNIA. A Selectivity filter motif is present at residues 463-468; sequence SVGFGN. The Extracellular segment spans residues 471 to 477; the sequence is PSTDIEK. A helical membrane pass occupies residues 478-498; the sequence is IFAVAIMMIGSLLYATIFGNV. Topologically, residues 499 to 989 are cytoplasmic; it reads TTIFQQMYAN…ESDRDIFGAS (491 aa). The interval 673–770 is calmodulin-binding; that stretch reads KRDALQKVLE…LDDLDVEKGN (98 aa). Residues 699-701 form an interaction with cyclic nucleotide-binding pocket region; the sequence is YNL. Basic and acidic residues-rich tracts occupy residues 857 to 879 and 887 to 901; these read ESME…KTDS and SDLR…RSPQ. Disordered regions lie at residues 857-905 and 961-989; these read ESME…DRSP and RGSA…FGAS. A CAD (involved in subunit assembly) region spans residues 924–964; it reads ATVLEVKYELKEDIKALNAKMTSIEKQLSEILRILMSRGSA. Over residues 962–979 the composition is skewed to polar residues; sequence GSAQSPQETGEISRPQSP. S974, S978, and S981 each carry phosphoserine. Residues 980–989 show a composition bias toward basic and acidic residues; it reads ESDRDIFGAS.

It belongs to the potassium channel family. H (Eag) (TC 1.A.1.20) subfamily. Kv10.1/KCNH1 sub-subfamily. In terms of assembly, homomultimer. The potassium channel is composed of a homo- or heterotetrameric complex of pore-forming alpha subunits that can associate with modulating beta subunits. Heteromultimer with KCNH5/EAG2. Interacts with ALG10B. Interacts with RABEP1. Interacts (via C-terminus) with CTTN. Interacts (via C-terminal cytoplasmic region) with Ca(2+)-bound calmodulin. Channel activity is regulated via tyrosine phosphorylation/dephosphorylation by SRC and PTPN6. As to expression, detected in brain (at protein level). Highly expressed in olfactory bulb. Detected in brain cortex, hippocampus, brain stem, striatum, thalamus, hypothalamus and spinal cord.

It is found in the cell membrane. The protein localises to the nucleus inner membrane. The protein resides in the cell projection. It localises to the dendrite. Its subcellular location is the axon. It is found in the presynaptic cell membrane. The protein localises to the perikaryon. The protein resides in the postsynaptic density membrane. It localises to the early endosome membrane. It catalyses the reaction K(+)(in) = K(+)(out). With respect to regulation, channel activity is inhibited by interaction with Ca(2+)-bound calmodulin. Interaction of a single pore-forming alpha subunit with a calmodulin chain is sufficient to promote channel closure. Channel activity is not regulated by cyclic nucleotides. Channel activity is inhibited by binding intracellular phosphatidylinositol-3,5-bisphosphate and phosphatidylinositol-4,5-bisphosphate (PIP2), but is not inhibited by phosphatidylinositol 4-phosphate. Pore-forming (alpha) subunit of a voltage-gated delayed rectifier potassium channel that mediates outward-rectifying potassium currents which, on depolarization, reaches a steady-state level and do not inactivate. The activation kinetics depend on the prepulse potential and external divalent cation concentration. With negative prepulses, the current activation is delayed and slowed down several fold, whereas more positive prepulses speed up activation. The time course of activation is biphasic with a fast and a slowly activating current component. Activates at more positive membrane potentials and exhibit a steeper activation curve. Channel properties are modulated by subunit assembly. Mediates IK(NI) current in myoblasts. Involved in the regulation of cell proliferation and differentiation, in particular adipogenic and osteogenic differentiation in bone marrow-derived mesenchymal stem cells (MSCs). The protein is Voltage-gated delayed rectifier potassium channel KCNH1 of Mus musculus (Mouse).